We begin with the raw amino-acid sequence, 142 residues long: Cell division protein SepF (142 aa).

It belongs to the SepF family. In terms of assembly, homodimer. Interacts with FtsZ.

Its subcellular location is the cytoplasm. Cell division protein that is part of the divisome complex and is recruited early to the Z-ring. Probably stimulates Z-ring formation, perhaps through the cross-linking of FtsZ protofilaments. Its function overlaps with FtsA. In Syntrophomonas wolfei subsp. wolfei (strain DSM 2245B / Goettingen), this protein is Cell division protein SepF.